Here is a 499-residue protein sequence, read N- to C-terminus: Proline--tRNA ligase (499 aa).

Residues 1–17 are compositionally biased toward basic and acidic residues; sequence MTKDGGKKDNQGQDKKA. The interval 1 to 21 is disordered; sequence MTKDGGKKDNQGQDKKAQQYG.

This sequence belongs to the class-II aminoacyl-tRNA synthetase family. ProS type 3 subfamily. In terms of assembly, homodimer.

The protein resides in the cytoplasm. It catalyses the reaction tRNA(Pro) + L-proline + ATP = L-prolyl-tRNA(Pro) + AMP + diphosphate. Functionally, catalyzes the attachment of proline to tRNA(Pro) in a two-step reaction: proline is first activated by ATP to form Pro-AMP and then transferred to the acceptor end of tRNA(Pro). Can inadvertently accommodate and process cysteine. In Deinococcus radiodurans (strain ATCC 13939 / DSM 20539 / JCM 16871 / CCUG 27074 / LMG 4051 / NBRC 15346 / NCIMB 9279 / VKM B-1422 / R1), this protein is Proline--tRNA ligase (proS).